A 484-amino-acid chain; its full sequence is Coronin-1B (484 aa).

Phosphoserine is present on Ser-2. 5 WD repeats span residues 80 to 120 (GHTG…LTSP), 130 to 170 (GHTK…ELYR), 174 to 213 (LHPDLIYNVSWNHNGSLFCSACKDKSVRIIDPRRGTLVAE), 217 to 260 (AHEG…EPMA), and 265 to 305 (DSSN…PYIH). The segment at 404 to 446 (LKVSRRNVLSDSRPASYSRSGASTATAVTDVPSGNLAGAGEAG) is disordered. Positions 410–430 (NVLSDSRPASYSRSGASTATA) are enriched in polar residues. A coiled-coil region spans residues 444–482 (EAGKLEEVMQELRALRMLVKEQGERISRLEEQLGRMENG).

Belongs to the WD repeat coronin family. As to quaternary structure, forms homooligomers, but does not form complexes with the other coronins. Interacts with Arp2/3 complex components, including ACTR2, ARPC1B and ARPC2. Binds actin. Phosphorylation on Ser-2 regulates the interaction with the Arp2/3 complex and cell motility in fibroblasts. Phosphorylation does not seem to affect subcellular location. In terms of tissue distribution, ubiquitous.

Its subcellular location is the cytoplasm. It localises to the cytoskeleton. The protein resides in the stress fiber. Regulates leading edge dynamics and cell motility in fibroblasts. May be involved in cytokinesis and signal transduction. This Mus musculus (Mouse) protein is Coronin-1B (Coro1b).